An 88-amino-acid polypeptide reads, in one-letter code: Small ribosomal subunit protein bS20 (88 aa).

Disordered regions lie at residues Met-1 to Arg-25 and Gly-61 to Ala-88.

It belongs to the bacterial ribosomal protein bS20 family.

Its function is as follows. Binds directly to 16S ribosomal RNA. The sequence is that of Small ribosomal subunit protein bS20 from Jannaschia sp. (strain CCS1).